Here is a 470-residue protein sequence, read N- to C-terminus: Cysteine--tRNA ligase (470 aa).

C29 contributes to the Zn(2+) binding site. A 'HIGH' region motif is present at residues 31–41 (PTVYNYAHIGN). 3 residues coordinate Zn(2+): C211, H236, and E240. Residues 273–277 (KMSKS) carry the 'KMSKS' region motif. K276 is a binding site for ATP.

This sequence belongs to the class-I aminoacyl-tRNA synthetase family. As to quaternary structure, monomer. It depends on Zn(2+) as a cofactor.

The protein resides in the cytoplasm. It catalyses the reaction tRNA(Cys) + L-cysteine + ATP = L-cysteinyl-tRNA(Cys) + AMP + diphosphate. The chain is Cysteine--tRNA ligase from Phenylobacterium zucineum (strain HLK1).